The following is an 83-amino-acid chain: Sulfur carrier protein TusA (83 aa).

Cys19 (cysteine persulfide intermediate) is an active-site residue.

The protein belongs to the sulfur carrier protein TusA family.

It localises to the cytoplasm. Its function is as follows. Sulfur carrier protein which probably makes part of a sulfur-relay system. This Vibrio atlanticus (strain LGP32) (Vibrio splendidus (strain Mel32)) protein is Sulfur carrier protein TusA.